A 410-amino-acid polypeptide reads, in one-letter code: Dual-specificity RNA methyltransferase RlmN (410 aa).

Glu-123 acts as the Proton acceptor in catalysis. Residues 129–378 enclose the Radical SAM core domain; sequence EEGRGTLCIS…IRTPRGRDIL (250 aa). Residues Cys-136 and Cys-381 are joined by a disulfide bond. [4Fe-4S] cluster is bound by residues Cys-143, Cys-147, and Cys-150. Residues 207 to 208, Ser-239, 261 to 263, and Asn-338 contribute to the S-adenosyl-L-methionine site; these read GE and SLH. The active-site S-methylcysteine intermediate is the Cys-381.

The protein belongs to the radical SAM superfamily. RlmN family. The cofactor is [4Fe-4S] cluster.

The protein localises to the cytoplasm. It catalyses the reaction adenosine(2503) in 23S rRNA + 2 reduced [2Fe-2S]-[ferredoxin] + 2 S-adenosyl-L-methionine = 2-methyladenosine(2503) in 23S rRNA + 5'-deoxyadenosine + L-methionine + 2 oxidized [2Fe-2S]-[ferredoxin] + S-adenosyl-L-homocysteine. It carries out the reaction adenosine(37) in tRNA + 2 reduced [2Fe-2S]-[ferredoxin] + 2 S-adenosyl-L-methionine = 2-methyladenosine(37) in tRNA + 5'-deoxyadenosine + L-methionine + 2 oxidized [2Fe-2S]-[ferredoxin] + S-adenosyl-L-homocysteine. Its function is as follows. Specifically methylates position 2 of adenine 2503 in 23S rRNA and position 2 of adenine 37 in tRNAs. m2A2503 modification seems to play a crucial role in the proofreading step occurring at the peptidyl transferase center and thus would serve to optimize ribosomal fidelity. This Mesorhizobium japonicum (strain LMG 29417 / CECT 9101 / MAFF 303099) (Mesorhizobium loti (strain MAFF 303099)) protein is Dual-specificity RNA methyltransferase RlmN.